Here is a 497-residue protein sequence, read N- to C-terminus: Probable cytosol aminopeptidase (497 aa).

Residues Lys-263 and Asp-268 each coordinate Mn(2+). Residue Lys-275 is part of the active site. Mn(2+) contacts are provided by Asp-286, Asp-345, and Glu-347. Arg-349 is an active-site residue.

This sequence belongs to the peptidase M17 family. Requires Mn(2+) as cofactor.

It localises to the cytoplasm. It carries out the reaction Release of an N-terminal amino acid, Xaa-|-Yaa-, in which Xaa is preferably Leu, but may be other amino acids including Pro although not Arg or Lys, and Yaa may be Pro. Amino acid amides and methyl esters are also readily hydrolyzed, but rates on arylamides are exceedingly low.. The enzyme catalyses Release of an N-terminal amino acid, preferentially leucine, but not glutamic or aspartic acids.. Its function is as follows. Presumably involved in the processing and regular turnover of intracellular proteins. Catalyzes the removal of unsubstituted N-terminal amino acids from various peptides. This is Probable cytosol aminopeptidase from Agrobacterium fabrum (strain C58 / ATCC 33970) (Agrobacterium tumefaciens (strain C58)).